Reading from the N-terminus, the 142-residue chain is Nucleoside diphosphate kinase (142 aa).

ATP is bound by residues Lys-11, Phe-59, Arg-87, Thr-93, Arg-104, and Asn-114. The active-site Pros-phosphohistidine intermediate is His-117.

Belongs to the NDK family. Homotetramer. Mg(2+) is required as a cofactor.

Its subcellular location is the cytoplasm. It catalyses the reaction a 2'-deoxyribonucleoside 5'-diphosphate + ATP = a 2'-deoxyribonucleoside 5'-triphosphate + ADP. The enzyme catalyses a ribonucleoside 5'-diphosphate + ATP = a ribonucleoside 5'-triphosphate + ADP. Its function is as follows. Major role in the synthesis of nucleoside triphosphates other than ATP. The ATP gamma phosphate is transferred to the NDP beta phosphate via a ping-pong mechanism, using a phosphorylated active-site intermediate. The chain is Nucleoside diphosphate kinase from Pectobacterium atrosepticum (strain SCRI 1043 / ATCC BAA-672) (Erwinia carotovora subsp. atroseptica).